Consider the following 807-residue polypeptide: Centrosomal protein of 97 kDa (807 aa).

LRR repeat units follow at residues 34–55 (DTQT…EKCR), 56–77 (NLVQ…AKLI), 78–99 (HLRV…KDLV), 100–121 (HLEW…NSST), 122–143 (SLQH…SKLK), 144–165 (SLKT…SACL), and 168–189 (SLTI…AFLA). The 39-residue stretch at 208–246 (TPSIPGFDYRPFIVSWCLNLKVLDGYVVSQKESLKAEWL) folds into the LRRCT domain. Residues 306–330 (RSDGYLTSSTPNKRLPLSTEHHSPT) are disordered. The IQ domain occupies 519 to 548 (ISKAATKLQSCWRGFYARKYNPKVKDVCYE). The span at 607-623 (TANSSENDLPSASNSKH) shows a compositional bias: polar residues. A disordered region spans residues 607-756 (TANSSENDLP…RPEITTCSDN (150 aa)). A compositionally biased stretch (basic and acidic residues) spans 681–690 (TGRHYNDKVP). The segment covering 704-724 (SQSSKDSFTSEQDSSLLQQYL) has biased composition (polar residues).

Its subcellular location is the cytoplasm. The protein resides in the cytoskeleton. The protein localises to the microtubule organizing center. It localises to the centrosome. Functionally, acts as a key negative regulator of ciliogenesis in collaboration with ccp110 by capping the mother centriole thereby preventing cilia formation. Required for recruitment of ccp110 to the centrosome. This Xenopus laevis (African clawed frog) protein is Centrosomal protein of 97 kDa (cep97).